Reading from the N-terminus, the 836-residue chain is Eukaryotic translation initiation factor 3 subunit C (836 aa).

A disordered region spans residues 1–97 (MSRFFVSGYD…RRVVKSAKEK (97 aa)). A compositionally biased stretch (acidic residues) spans 13 to 55 (SSSEEEDLLTSSEEELMSSEQESDSEFDDEFANDDDSDSSDSD). The segment covering 86–97 (EGRRVVKSAKEK) has biased composition (basic and acidic residues). One can recognise a PCI domain in the interval 586–761 (FHMHINLELL…KSINFVSSEH (176 aa)). Residues 783-817 (DKNEKTASNGHGRKTTQQQQQQQQKEQREQTHDEN) form a disordered region. Residues 797–806 (TTQQQQQQQQ) show a composition bias toward low complexity. Over residues 807–817 (KEQREQTHDEN) the composition is skewed to basic and acidic residues.

This sequence belongs to the eIF-3 subunit C family. As to quaternary structure, component of the eukaryotic translation initiation factor 3 (eIF-3) complex.

Its subcellular location is the cytoplasm. In terms of biological role, component of the eukaryotic translation initiation factor 3 (eIF-3) complex, which is involved in protein synthesis of a specialized repertoire of mRNAs and, together with other initiation factors, stimulates binding of mRNA and methionyl-tRNAi to the 40S ribosome. The eIF-3 complex specifically targets and initiates translation of a subset of mRNAs involved in cell proliferation. The sequence is that of Eukaryotic translation initiation factor 3 subunit C from Meyerozyma guilliermondii (strain ATCC 6260 / CBS 566 / DSM 6381 / JCM 1539 / NBRC 10279 / NRRL Y-324) (Yeast).